The following is a 396-amino-acid chain: Succinyl-diaminopimelate desuccinylase (396 aa).

Histidine 74 provides a ligand contact to Zn(2+). Residue aspartate 76 is part of the active site. Aspartate 107 is a binding site for Zn(2+). The active-site Proton acceptor is glutamate 142. Zn(2+) is bound by residues glutamate 143, glutamate 171, and histidine 360.

This sequence belongs to the peptidase M20A family. DapE subfamily. Homodimer. Zn(2+) is required as a cofactor. The cofactor is Co(2+).

The enzyme catalyses N-succinyl-(2S,6S)-2,6-diaminopimelate + H2O = (2S,6S)-2,6-diaminopimelate + succinate. Its pathway is amino-acid biosynthesis; L-lysine biosynthesis via DAP pathway; LL-2,6-diaminopimelate from (S)-tetrahydrodipicolinate (succinylase route): step 3/3. Its function is as follows. Catalyzes the hydrolysis of N-succinyl-L,L-diaminopimelic acid (SDAP), forming succinate and LL-2,6-diaminopimelate (DAP), an intermediate involved in the bacterial biosynthesis of lysine and meso-diaminopimelic acid, an essential component of bacterial cell walls. The protein is Succinyl-diaminopimelate desuccinylase of Methylobacterium nodulans (strain LMG 21967 / CNCM I-2342 / ORS 2060).